Consider the following 455-residue polypeptide: tRNA modification GTPase MnmE (455 aa).

(6S)-5-formyl-5,6,7,8-tetrahydrofolate is bound by residues Arg-24, Glu-81, and Lys-121. The TrmE-type G domain maps to 217 to 378 (GMKVVIAGRP…LKEHLKDIMG (162 aa)). Asn-227 is a K(+) binding site. GTP contacts are provided by residues 227-232 (NAGKSS), 246-252 (TDIAGTT), 271-274 (DTAG), and 336-339 (NKAD). Residue Ser-231 participates in Mg(2+) binding. K(+) contacts are provided by Thr-246, Ile-248, and Thr-251. Thr-252 contacts Mg(2+). Lys-455 lines the (6S)-5-formyl-5,6,7,8-tetrahydrofolate pocket.

It belongs to the TRAFAC class TrmE-Era-EngA-EngB-Septin-like GTPase superfamily. TrmE GTPase family. In terms of assembly, homodimer. Heterotetramer of two MnmE and two MnmG subunits. K(+) serves as cofactor.

The protein localises to the cytoplasm. In terms of biological role, exhibits a very high intrinsic GTPase hydrolysis rate. Involved in the addition of a carboxymethylaminomethyl (cmnm) group at the wobble position (U34) of certain tRNAs, forming tRNA-cmnm(5)s(2)U34. The protein is tRNA modification GTPase MnmE of Psychromonas ingrahamii (strain DSM 17664 / CCUG 51855 / 37).